The primary structure comprises 465 residues: UDP-glycosyltransferase 89A2 (465 aa).

Residues Ser-291, 342-344 (VSQ), 359-367 (HCGWNSVLE), and 381-384 (EADQ) contribute to the UDP-alpha-D-glucose site.

The protein belongs to the UDP-glycosyltransferase family.

Glucosyltransferase that glucosylates benzoates and benzoate derivatives in vitro. The protein is UDP-glycosyltransferase 89A2 (UGT89A2) of Arabidopsis thaliana (Mouse-ear cress).